Consider the following 728-residue polypeptide: Catalase-peroxidase (728 aa).

The segment at residues 91 to 218 is a cross-link (tryptophyl-tyrosyl-methioninium (Trp-Tyr) (with M-244)); the sequence is WHSAGTYRTA…LAAVQMGLIY (128 aa). Catalysis depends on His-92, which acts as the Proton acceptor. The tryptophyl-tyrosyl-methioninium (Tyr-Met) (with W-91) cross-link spans 218–244; sequence YVNPEGPDGNPDPVAAARDIRDTFARM. His-259 lines the heme b pocket.

Belongs to the peroxidase family. Peroxidase/catalase subfamily. Homodimer or homotetramer. It depends on heme b as a cofactor. In terms of processing, formation of the three residue Trp-Tyr-Met cross-link is important for the catalase, but not the peroxidase activity of the enzyme.

The catalysed reaction is H2O2 + AH2 = A + 2 H2O. It carries out the reaction 2 H2O2 = O2 + 2 H2O. Its function is as follows. Bifunctional enzyme with both catalase and broad-spectrum peroxidase activity. In Burkholderia thailandensis (strain ATCC 700388 / DSM 13276 / CCUG 48851 / CIP 106301 / E264), this protein is Catalase-peroxidase.